A 141-amino-acid polypeptide reads, in one-letter code: Nucleoside diphosphate kinase (141 aa).

The ATP site is built by Lys-11, Phe-59, Arg-87, Thr-93, Arg-104, and Asn-114. His-117 serves as the catalytic Pros-phosphohistidine intermediate.

Belongs to the NDK family. As to quaternary structure, homotetramer. Requires Mg(2+) as cofactor.

Its subcellular location is the cytoplasm. It carries out the reaction a 2'-deoxyribonucleoside 5'-diphosphate + ATP = a 2'-deoxyribonucleoside 5'-triphosphate + ADP. The enzyme catalyses a ribonucleoside 5'-diphosphate + ATP = a ribonucleoside 5'-triphosphate + ADP. Major role in the synthesis of nucleoside triphosphates other than ATP. The ATP gamma phosphate is transferred to the NDP beta phosphate via a ping-pong mechanism, using a phosphorylated active-site intermediate. In Polaromonas naphthalenivorans (strain CJ2), this protein is Nucleoside diphosphate kinase.